Reading from the N-terminus, the 273-residue chain is Formamidopyrimidine-DNA glycosylase (273 aa).

The Schiff-base intermediate with DNA role is filled by proline 2. Glutamate 3 serves as the catalytic Proton donor. The Proton donor; for beta-elimination activity role is filled by lysine 58. The DNA site is built by histidine 91, arginine 109, and arginine 154. An FPG-type zinc finger spans residues 239-273; it reads FCYARTGEPCRICKTPIRQIVQGQRSTFYCPNCQK. The active-site Proton donor; for delta-elimination activity is arginine 263.

This sequence belongs to the FPG family. In terms of assembly, monomer. Requires Zn(2+) as cofactor.

It carries out the reaction Hydrolysis of DNA containing ring-opened 7-methylguanine residues, releasing 2,6-diamino-4-hydroxy-5-(N-methyl)formamidopyrimidine.. The enzyme catalyses 2'-deoxyribonucleotide-(2'-deoxyribose 5'-phosphate)-2'-deoxyribonucleotide-DNA = a 3'-end 2'-deoxyribonucleotide-(2,3-dehydro-2,3-deoxyribose 5'-phosphate)-DNA + a 5'-end 5'-phospho-2'-deoxyribonucleoside-DNA + H(+). Its function is as follows. Involved in base excision repair of DNA damaged by oxidation or by mutagenic agents. Acts as a DNA glycosylase that recognizes and removes damaged bases. Has a preference for oxidized purines, such as 7,8-dihydro-8-oxoguanine (8-oxoG). Has AP (apurinic/apyrimidinic) lyase activity and introduces nicks in the DNA strand. Cleaves the DNA backbone by beta-delta elimination to generate a single-strand break at the site of the removed base with both 3'- and 5'-phosphates. The protein is Formamidopyrimidine-DNA glycosylase of Janthinobacterium sp. (strain Marseille) (Minibacterium massiliensis).